The primary structure comprises 85 residues: Small ribosomal subunit protein uS17 (85 aa).

It belongs to the universal ribosomal protein uS17 family. Part of the 30S ribosomal subunit.

In terms of biological role, one of the primary rRNA binding proteins, it binds specifically to the 5'-end of 16S ribosomal RNA. This chain is Small ribosomal subunit protein uS17, found in Acetivibrio thermocellus (strain ATCC 27405 / DSM 1237 / JCM 9322 / NBRC 103400 / NCIMB 10682 / NRRL B-4536 / VPI 7372) (Clostridium thermocellum).